The sequence spans 338 residues: tRNA N6-adenosine threonylcarbamoyltransferase (338 aa).

Fe cation contacts are provided by histidine 111 and histidine 115. Residues leucine 134–glycine 138, aspartate 167, glycine 180, and asparagine 272 contribute to the substrate site. Residue aspartate 300 participates in Fe cation binding.

This sequence belongs to the KAE1 / TsaD family. Fe(2+) serves as cofactor.

The protein resides in the cytoplasm. The enzyme catalyses L-threonylcarbamoyladenylate + adenosine(37) in tRNA = N(6)-L-threonylcarbamoyladenosine(37) in tRNA + AMP + H(+). Required for the formation of a threonylcarbamoyl group on adenosine at position 37 (t(6)A37) in tRNAs that read codons beginning with adenine. Is involved in the transfer of the threonylcarbamoyl moiety of threonylcarbamoyl-AMP (TC-AMP) to the N6 group of A37, together with TsaE and TsaB. TsaD likely plays a direct catalytic role in this reaction. The chain is tRNA N6-adenosine threonylcarbamoyltransferase from Shewanella halifaxensis (strain HAW-EB4).